A 411-amino-acid polypeptide reads, in one-letter code: Class E basic helix-loop-helix protein 40 (411 aa).

Residues 1-20 (MERIPSAQPPPTCLPKAPGL) form a disordered region. Residues 1–139 (MERIPSAQPP…LSGRNLEAGQ (139 aa)) are essential for interaction with BMAL1, E-box binding and repressor activity against the CLOCK-BMAL1 heterodimer. The region spanning 52-107 (TYKLPHRLIEKKRRDRINECIAQLKDLLPEHLKLTTLGHLEKAVVLELTLKHVKAL) is the bHLH domain. The interval 75-79 (LKDLL) is necessary for interaction with RXRA and repressor activity against RXRA. The Orange domain occupies 142–175 (FCSGFQTCAREVLQYLAKHENTRDLKSSQLVTHL). Lys159 participates in a covalent cross-link: Glycyl lysine isopeptide (Lys-Gly) (interchain with G-Cter in SUMO1, SUMO2 and SUMO3). Lys167 is covalently cross-linked (Glycyl lysine isopeptide (Lys-Gly) (interchain with G-Cter in SUMO2)). The segment at 227-294 (FAPSGGEQSG…PPTKKSRMQL (68 aa)) is disordered. Ser235 carries the post-translational modification Phosphoserine. Positions 248–271 (ELEKGDLRSEQPYFKSDHGRRFAV) are enriched in basic and acidic residues. Lys279 participates in a covalent cross-link: Glycyl lysine isopeptide (Lys-Gly) (interchain with G-Cter in SUMO1); alternate. Lys279 participates in a covalent cross-link: Glycyl lysine isopeptide (Lys-Gly) (interchain with G-Cter in SUMO1, SUMO2 and SUMO3); alternate. Lys279 participates in a covalent cross-link: Glycyl lysine isopeptide (Lys-Gly) (interchain with G-Cter in SUMO2); alternate. A Glycyl lysine isopeptide (Lys-Gly) (interchain with G-Cter in SUMO2) cross-link involves residue Lys288. Ser383 carries the phosphoserine modification.

As to quaternary structure, homodimer. Heterodimer with BHLHE41/DEC2. Interacts with ubiquitin-conjugating enzyme UBE2I/UBC9. Interacts with HDAC1, SUMO1, RXRA and BMAL1. Interacts with TCF3/E47. Post-translationally, ubiquitinated; which may lead to proteasomal degradation. Sumoylation inhibits its ubiquitination and promotes its negative regulation of the CLOCK-BMAL1 heterodimer transcriptional activator activity.

The protein resides in the cytoplasm. It is found in the nucleus. In terms of biological role, transcriptional repressor involved in the regulation of the circadian rhythm by negatively regulating the activity of the clock genes and clock-controlled genes. Acts as the negative limb of a novel autoregulatory feedback loop (DEC loop) which differs from the one formed by the PER and CRY transcriptional repressors (PER/CRY loop). Both these loops are interlocked as it represses the expression of PER1/2 and in turn is repressed by PER1/2 and CRY1/2. Represses the activity of the circadian transcriptional activator: CLOCK-BMAL1|BMAL2 heterodimer by competing for the binding to E-box elements (5'-CACGTG-3') found within the promoters of its target genes. Negatively regulates its own expression and the expression of DBP and BHLHE41/DEC2. Acts as a corepressor of RXR and the RXR-LXR heterodimers and represses the ligand-induced RXRA and NR1H3/LXRA transactivation activity. May function as a transcriptional factor for neuronal differentiation. Represses the transcription of NR0B2 and attentuates the transactivation of NR0B2 by the CLOCK-BMAL1 complex. Drives the circadian rhythm of blood pressure through transcriptional repression of ATP1B1 in the cardiovascular system. The protein is Class E basic helix-loop-helix protein 40 (Bhlhe40) of Mus musculus (Mouse).